The primary structure comprises 349 residues: Green-sensitive opsin-3 (349 aa).

At M1–Q36 the chain is on the extracellular side. N-linked (GlcNAc...) asparagine glycans are attached at residues N2 and N15. Residues F37 to V61 traverse the membrane as a helical segment. Topologically, residues T62 to N73 are cytoplasmic. Residues F74 to I99 traverse the membrane as a helical segment. The Extracellular portion of the chain corresponds to N100–E113. The cysteines at positions 110 and 187 are disulfide-linked. The chain crosses the membrane as a helical span at residues G114–I133. Residues E134 to H152 are Cytoplasmic-facing. A helical transmembrane segment spans residues A153 to S176. Over R177–S202 the chain is Extracellular. N-linked (GlcNAc...) asparagine glycosylation is present at N200. Residues Y203–V230 traverse the membrane as a helical segment. Over K231–R252 the chain is Cytoplasmic. Residues M253 to F276 form a helical membrane-spanning segment. Over F277–S284 the chain is Extracellular. The helical transmembrane segment at A285–L309 threads the bilayer. K296 carries the N6-(retinylidene)lysine modification. At N310–A349 the chain is on the cytoplasmic side. A disordered region spans residues G329–A349. Residues S334–A349 are compositionally biased toward low complexity.

Belongs to the G-protein coupled receptor 1 family. Opsin subfamily. Post-translationally, phosphorylated on some or all of the serine and threonine residues present in the C-terminal region.

It is found in the membrane. Its function is as follows. Visual pigments are the light-absorbing molecules that mediate vision. They consist of an apoprotein, opsin, covalently linked to cis-retinal. This Danio rerio (Zebrafish) protein is Green-sensitive opsin-3 (opn1mw3).